Consider the following 214-residue polypeptide: Adenylate kinase (214 aa).

10 to 15 (GAGKGT) contacts ATP. The interval 30–59 (STGDMLRAAVKAQTPVGLKAKAVMDRGELV) is NMP. Residues Thr31, Arg36, 57–59 (ELV), 85–88 (GYPR), and Gln92 contribute to the AMP site. Positions 126–163 (GRFTCAKCGTGYHDRHKQPAREGVCDVCGSTEFKRRPD) are LID. Arg127 lines the ATP pocket. Residues Cys130, Cys133, Cys150, and Cys153 each contribute to the Zn(2+) site. Arg160 and Arg172 together coordinate AMP. Gly200 provides a ligand contact to ATP.

The protein belongs to the adenylate kinase family. As to quaternary structure, monomer.

It localises to the cytoplasm. It catalyses the reaction AMP + ATP = 2 ADP. The protein operates within purine metabolism; AMP biosynthesis via salvage pathway; AMP from ADP: step 1/1. Its function is as follows. Catalyzes the reversible transfer of the terminal phosphate group between ATP and AMP. Plays an important role in cellular energy homeostasis and in adenine nucleotide metabolism. The chain is Adenylate kinase from Erythrobacter litoralis (strain HTCC2594).